The following is a 251-amino-acid chain: Flap endonuclease Xni (251 aa).

Asp-104 is a binding site for Mg(2+). Residues 160–250 (VQPQQLPDYW…DGNLQQLRLK (91 aa)) enclose the 5'-3' exonuclease domain. Residues Leu-171, Ala-172, Pro-180, Val-182, and Ile-185 each coordinate K(+). Positions 184 to 189 (GIGPKS) are interaction with DNA.

It belongs to the Xni family. The cofactor is Mg(2+). K(+) serves as cofactor.

Its function is as follows. Has flap endonuclease activity. During DNA replication, flap endonucleases cleave the 5'-overhanging flap structure that is generated by displacement synthesis when DNA polymerase encounters the 5'-end of a downstream Okazaki fragment. The protein is Flap endonuclease Xni of Escherichia fergusonii (strain ATCC 35469 / DSM 13698 / CCUG 18766 / IAM 14443 / JCM 21226 / LMG 7866 / NBRC 102419 / NCTC 12128 / CDC 0568-73).